The chain runs to 108 residues: VQ motif-containing protein 10 (108 aa).

The VQ signature appears at 29–38 (FKTVVQELTG). The segment at 65–85 (IGEDTRQLHGGGGGGGRMGTT) is disordered. The segment covering 73–82 (HGGGGGGGRM) has biased composition (gly residues).

Interacts with WRKY25, WRKY26 and WRKY33.

It localises to the nucleus. May modulate WRKY transcription factor activities. The polypeptide is VQ motif-containing protein 10 (Arabidopsis thaliana (Mouse-ear cress)).